The primary structure comprises 236 residues: Purine nucleoside phosphorylase DeoD-type 1 (236 aa).

Position 5 (His5) interacts with a purine D-ribonucleoside. Phosphate-binding positions include Gly21, Arg25, Arg44, and 88–91 (RVGS). A purine D-ribonucleoside-binding positions include 180-182 (EME) and 204-205 (TD). Residue Asp205 is the Proton donor of the active site.

This sequence belongs to the PNP/UDP phosphorylase family. Homohexamer; trimer of homodimers.

It catalyses the reaction a purine D-ribonucleoside + phosphate = a purine nucleobase + alpha-D-ribose 1-phosphate. It carries out the reaction a purine 2'-deoxy-D-ribonucleoside + phosphate = a purine nucleobase + 2-deoxy-alpha-D-ribose 1-phosphate. Functionally, catalyzes the reversible phosphorolytic breakdown of the N-glycosidic bond in the beta-(deoxy)ribonucleoside molecules, with the formation of the corresponding free purine bases and pentose-1-phosphate. This chain is Purine nucleoside phosphorylase DeoD-type 1, found in Shewanella oneidensis (strain ATCC 700550 / JCM 31522 / CIP 106686 / LMG 19005 / NCIMB 14063 / MR-1).